The following is an 89-amino-acid chain: Small ribosomal subunit protein uS15 (89 aa).

The protein belongs to the universal ribosomal protein uS15 family. Part of the 30S ribosomal subunit. Forms a bridge to the 50S subunit in the 70S ribosome, contacting the 23S rRNA.

In terms of biological role, one of the primary rRNA binding proteins, it binds directly to 16S rRNA where it helps nucleate assembly of the platform of the 30S subunit by binding and bridging several RNA helices of the 16S rRNA. Forms an intersubunit bridge (bridge B4) with the 23S rRNA of the 50S subunit in the ribosome. The chain is Small ribosomal subunit protein uS15 from Aeromonas hydrophila subsp. hydrophila (strain ATCC 7966 / DSM 30187 / BCRC 13018 / CCUG 14551 / JCM 1027 / KCTC 2358 / NCIMB 9240 / NCTC 8049).